A 526-amino-acid polypeptide reads, in one-letter code: CTP synthase (526 aa).

The interval 1 to 264 (MPQRFIVVTG…HKLIAKELDI (264 aa)) is amidoligase domain. Serine 14 provides a ligand contact to CTP. Serine 14 contributes to the UTP binding site. ATP contacts are provided by residues 15 to 20 (GIGKGI) and aspartate 72. The Mg(2+) site is built by aspartate 72 and glutamate 138. CTP-binding positions include 145 to 147 (DIE), 185 to 190 (KTKPTQ), and lysine 221. UTP contacts are provided by residues 185–190 (KTKPTQ) and lysine 221. Residues 282-526 (KIGIVGKYLG…VKAAGGKIND (245 aa)) enclose the Glutamine amidotransferase type-1 domain. Glycine 342 is a binding site for L-glutamine. Cysteine 369 functions as the Nucleophile; for glutamine hydrolysis in the catalytic mechanism. Residues 370 to 373 (LGMQ), glutamate 393, and arginine 451 each bind L-glutamine. Active-site residues include histidine 499 and glutamate 501.

Belongs to the CTP synthase family. As to quaternary structure, homotetramer.

The enzyme catalyses UTP + L-glutamine + ATP + H2O = CTP + L-glutamate + ADP + phosphate + 2 H(+). It catalyses the reaction L-glutamine + H2O = L-glutamate + NH4(+). The catalysed reaction is UTP + NH4(+) + ATP = CTP + ADP + phosphate + 2 H(+). The protein operates within pyrimidine metabolism; CTP biosynthesis via de novo pathway; CTP from UDP: step 2/2. With respect to regulation, allosterically activated by GTP, when glutamine is the substrate; GTP has no effect on the reaction when ammonia is the substrate. The allosteric effector GTP functions by stabilizing the protein conformation that binds the tetrahedral intermediate(s) formed during glutamine hydrolysis. Inhibited by the product CTP, via allosteric rather than competitive inhibition. Its function is as follows. Catalyzes the ATP-dependent amination of UTP to CTP with either L-glutamine or ammonia as the source of nitrogen. Regulates intracellular CTP levels through interactions with the four ribonucleotide triphosphates. The polypeptide is CTP synthase (Thermosipho africanus (strain TCF52B)).